The chain runs to 301 residues: Mitochondrial thiamine pyrophosphate carrier 1 (301 aa).

Solcar repeat units lie at residues 15–102 (VTPT…ISKS), 115–200 (SSAN…AREL), and 206–293 (RVPF…SLSF). 6 consecutive transmembrane segments (helical) span residues 20-38 (ALVA…TAPL), 79-99 (VPAE…YSII), 121-141 (LIVG…FDLL), 172-192 (IYAG…LMFW), 207-227 (VPFI…GITF), and 252-272 (IFVT…FGIS).

It belongs to the mitochondrial carrier (TC 2.A.29) family.

The protein localises to the mitochondrion inner membrane. Its function is as follows. Mitochondrial transporter that mediates uptake of thiamine pyrophosphate (ThPP) into mitochondria. The polypeptide is Mitochondrial thiamine pyrophosphate carrier 1 (TPC1) (Candida albicans (strain SC5314 / ATCC MYA-2876) (Yeast)).